The sequence spans 263 residues: Putative steroid dehydrogenase 4 (263 aa).

The active-site Proton acceptor is Tyr-154.

Belongs to the short-chain dehydrogenases/reductases (SDR) family. 17-beta-HSD 3 subfamily.

In Caenorhabditis elegans, this protein is Putative steroid dehydrogenase 4 (stdh-4).